Here is a 903-residue protein sequence, read N- to C-terminus: Cell division cycle protein 48 homolog MJ1156 (903 aa).

Residues G220–T227 and G493–T500 contribute to the ATP site.

The protein belongs to the AAA ATPase family. CDC48 subfamily.

The protein is Cell division cycle protein 48 homolog MJ1156 of Methanocaldococcus jannaschii (strain ATCC 43067 / DSM 2661 / JAL-1 / JCM 10045 / NBRC 100440) (Methanococcus jannaschii).